A 154-amino-acid polypeptide reads, in one-letter code: Protein AE7-like 1 (154 aa).

It belongs to the MIP18 family.

May play a role in chromosome segregation through establishment of sister chromatid cohesion. Unable to complement ae7 mutants, and thus probably not involved in the cytosolic iron-sulfur assembly (CIA) pathway. This chain is Protein AE7-like 1, found in Arabidopsis thaliana (Mouse-ear cress).